We begin with the raw amino-acid sequence, 500 residues long: Cytochrome P450 monooxygenase ausR (500 aa).

The chain crosses the membrane as a helical span at residues Gly15–Ala35. Cys439 contributes to the heme binding site.

This sequence belongs to the cytochrome P450 family. Requires heme as cofactor.

The protein localises to the membrane. It functions in the pathway secondary metabolite biosynthesis; terpenoid biosynthesis. Functionally, cytochrome P450 monooxygenase; part of the gene cluster that mediates the biosynthesis of calidodehydroaustin, a fungal meroterpenoid. The first step of the pathway is the synthesis of 3,5-dimethylorsellinic acid by the polyketide synthase ausA. 3,5-dimethylorsellinic acid is then prenylated by the polyprenyl transferase ausN. Further epoxidation by the FAD-dependent monooxygenase ausM and cyclization by the probable terpene cyclase ausL lead to the formation of protoaustinoid A. Protoaustinoid A is then oxidized to spiro-lactone preaustinoid A3 by the combined action of the FAD-binding monooxygenases ausB and ausC, and the dioxygenase ausE. Acid-catalyzed keto-rearrangement and ring contraction of the tetraketide portion of preaustinoid A3 by ausJ lead to the formation of preaustinoid A4. The aldo-keto reductase ausK, with the help of ausH, is involved in the next step by transforming preaustinoid A4 into isoaustinone which is in turn hydroxylated by the P450 monooxygenase ausI to form austinolide. The cytochrome P450 monooxygenase ausG modifies austinolide to austinol. Austinol is further acetylated to austin by the O-acetyltransferase ausP, which spontaneously changes to dehydroaustin. The cytochrome P450 monooxygenase ausR then converts dehydroaustin is into 7-dehydrodehydroaustin. The hydroxylation catalyzed by ausR permits the O-acetyltransferase ausQ to add an additional acetyl group to the molecule, leading to the formation of acetoxydehydroaustin. The short chain dehydrogenase ausT catalyzes the reduction of the double bond present between carbon atoms 1 and 2 to convert 7-dehydrodehydroaustin into 1,2-dihydro-7-hydroxydehydroaustin. AusQ catalyzes not only an acetylation reaction but also the addition of the PKS ausV diketide product to 1,2-dihydro-7-hydroxydehydroaustin, forming precalidodehydroaustin. Finally, the iron/alpha-ketoglutarate-dependent dioxygenase converts precalidodehydroaustin into calidodehydroaustin. The chain is Cytochrome P450 monooxygenase ausR from Aspergillus calidoustus.